The sequence spans 77 residues: Fungal protease inhibitor F (77 aa).

An N-terminal signal peptide occupies residues 1 to 22 (MASKNLFVLFFIFALFAANIAA). 4 disulfide bridges follow: cysteine 25-cysteine 57, cysteine 36-cysteine 49, cysteine 40-cysteine 77, and cysteine 59-cysteine 71.

This sequence belongs to the protease inhibitor I40 family. In terms of tissue distribution, hemolymph.

Its subcellular location is the secreted. In terms of biological role, highly specific for fungal protease and subtilisin. This is Fungal protease inhibitor F from Bombyx mori (Silk moth).